We begin with the raw amino-acid sequence, 270 residues long: MLTVENIEVTLGATPVLHGIDMVAQPGQVTAIVGHNGSGKTTLLRAMTQETPYTGTIRLDGADLASFKPWELATRRAVLPQASRIAFPFTVLEVVRLGLLAGRDGARKALPQEALARVGLSGFEGRYYQELSGGEQQRVQLARVLAQVWEPVQDGQPRWLFLDEPVSSLDIGHQLEVMEIAREYARGGGGVIAVMHDLNLTAMFADHVVLLADGRCLSAGRPAQVMTDVTLSQAYGCTLQVNTSPPGDATYLLPHLARRTGGAHHARRTG.

An ABC transporter domain is found at 2 to 238 (LTVENIEVTL…VTLSQAYGCT (237 aa)). Residue 34-41 (GHNGSGKT) participates in ATP binding.

It belongs to the ABC transporter superfamily. Heme (hemin) importer (TC 3.A.1.14.5) family. As to quaternary structure, the complex is composed of two ATP-binding proteins (HmuV), two transmembrane proteins (HmuU) and a solute-binding protein (HmuT).

Its subcellular location is the cell inner membrane. Functionally, part of the ABC transporter complex HmuTUV involved in hemin import. Responsible for energy coupling to the transport system. The polypeptide is Hemin import ATP-binding protein HmuV (Jannaschia sp. (strain CCS1)).